The sequence spans 835 residues: MGFWMAMLLMLLLCLWVSCGIASVSYDHKAIIVNGQRKILISGSIHYPRSTPEMWPDLIQKAKEGGVDVIQTYVFWNGHEPEEGKYYFEERYDLVKFIKVVQEAGLYVHLRIGPYACAEWNFGGFPVWLKYVPGISFRTNNEPFKAAMQKFTTKIVDMMKAEKLYETQGGPIILSQIENEYGPMEWELGEPGKVYSEWAAKMAVDLGTGVPWIMCKQDDVPDPIINTCNGFYCDYFTPNKANKPKMWTEAWTAWFTEFGGPVPYRPAEDMAFAVARFIQTGGSFINYYMYHGGTNFGRTSGGPFIATSYDYDAPLDEFGSLRQPKWGHLKDLHRAIKLCEPALVSVDPTVTSLGNYQEARVFKSESGACAAFLANYNQHSFAKVAFGNMHYNLPPWSISILPDCKNTVYNTARVGAQSAQMKMTPVSRGFSWESFNEDAASHEDDTFTVVGLLEQINITRDVSDYLWYMTDIEIDPTEGFLNSGNWPWLTVFSAGHALHVFVNGQLAGTVYGSLENPKLTFSNGINLRAGVNKISLLSIAVGLPNVGPHFETWNAGVLGPVSLNGLNEGTRDLTWQKWFYKVGLKGEALSLHSLSGSPSVEWVEGSLVAQKQPLSWYKTTFNAPDGNEPLALDMNTMGKGQVWINGQSLGRHWPAYKSSGSCSVCNYTGWFDEKKCLTNCGEGSQRWYHVPRSWLYPTGNLLVVFEEWGGDPYGITLVKREIGSVCADIYEWQPQLLNWQRLVSGKFDRPLRPKAHLKCAPGQKISSIKFASFGTPEGVCGNFQQGSCHAPRSYDAFKKNCVGKESCSVQVTPENFGGDPCRNVLKKLSVEAICS.

The N-terminal stretch at 1 to 22 (MGFWMAMLLMLLLCLWVSCGIA) is a signal peptide. E180 (proton donor) is an active-site residue. E249 acts as the Nucleophile in catalysis. Residues 749–835 (RPLRPKAHLK…KKLSVEAICS (87 aa)) enclose the SUEL-type lectin domain.

The protein belongs to the glycosyl hydrolase 35 family.

It carries out the reaction Hydrolysis of terminal non-reducing beta-D-galactose residues in beta-D-galactosides.. Functionally, involved in cell wall degradation. Degrades polysaccharides containing beta-(1--&gt;4)-linked galactans, acting as an exo-(1--&gt;4)-beta-D-galactanase. This Solanum lycopersicum (Tomato) protein is Beta-galactosidase.